The chain runs to 114 residues: MNSQNPDDHEDTTVVGFEVPVSPVSSYNNVYSSTEDETRDPPAVPPHLQHSLLGNQGSMELAYAPQNVVLNHLYIENRDAPRSVVALGFSHRFRTKFVTVVIYKPVQRRGSANV.

The segment at 26–50 is disordered; it reads SYNNVYSSTEDETRDPPAVPPHLQH. The segment at 40-114 is association with SNF1 complex (ASC); it reads DPPAVPPHLQ…PVQRRGSANV (75 aa).

The protein belongs to the 5'-AMP-activated protein kinase beta subunit family. In terms of assembly, subunit of a probable heterotrimeric complex consisting of an alpha catalytic (KIN10 or KIN11) subunit, and a beta (KINB) and a gamma (KING or SNF4) non-catalytic regulatory subunits. Interacts with KIN10, KIN11 and SNF4. Interacts with FLZ1, FLZ2, FLZ3, FLZ4, FLZ5, FLZ7, FLZ8, FLZ10, FLZ13, FLZ14, FLZ15 and FLZ16. Expressed in rosette (at the protein level). Expressed in the whole plant and at the different developmental stage with a higher level in stems.

Regulatory subunit of the probable trimeric SNF1-related protein kinase (SnRK) complex, which may play a role in a signal transduction cascade regulating gene expression and carbohydrate metabolism in higher plants. In Arabidopsis thaliana (Mouse-ear cress), this protein is SNF1-related protein kinase regulatory subunit beta-3 (KINB3).